The primary structure comprises 64 residues: Conotoxin Im11.1 (64 aa).

The signal sequence occupies residues 1-26 (MMFRLTSVSCFLLVIACLNLVVLTNA). 4 disulfide bridges follow: Cys27–Cys41, Cys34–Cys46, Cys40–Cys50, and Cys45–Cys54. Asn57 bears the Asparagine amide mark. Positions 61 to 64 (ATFQ) are excised as a propeptide.

It belongs to the conotoxin I2 superfamily. As to expression, expressed by the venom duct.

The protein localises to the secreted. In Conus imperialis (Imperial cone), this protein is Conotoxin Im11.1.